We begin with the raw amino-acid sequence, 401 residues long: S-adenosylmethionine synthase (401 aa).

Position 135–140 (135–140 (GHGSGD)) interacts with ATP.

The protein belongs to the AdoMet synthase 2 family. Mg(2+) is required as a cofactor.

The catalysed reaction is L-methionine + ATP + H2O = S-adenosyl-L-methionine + phosphate + diphosphate. It functions in the pathway amino-acid biosynthesis; S-adenosyl-L-methionine biosynthesis; S-adenosyl-L-methionine from L-methionine: step 1/1. Its function is as follows. Catalyzes the formation of S-adenosylmethionine from methionine and ATP. This is S-adenosylmethionine synthase (mat) from Methanothermobacter thermautotrophicus (strain ATCC 29096 / DSM 1053 / JCM 10044 / NBRC 100330 / Delta H) (Methanobacterium thermoautotrophicum).